A 117-amino-acid chain; its full sequence is Ig heavy chain V region 5-84 (117 aa).

Positions 1-19 are cleaved as a signal peptide; sequence MNFGLSLIFLVLVLKGVLC. Positions 20–49 are framework-1; it reads EVKLVESGGGLVQPGGSLKLSCAASGFTFS. A disulfide bridge connects residues Cys-41 and Cys-115. Positions 50 to 54 are complementarity-determining-1; sequence SYTMS. Residues 55–68 are framework-2; that stretch reads WVRQTPEKRLEWVA. The interval 69–85 is complementarity-determining-2; that stretch reads YISNGGGSTYYPDTVKG. The segment at 86-117 is framework-3; it reads RFTISRDNAKNNLYLQMSSLKSEDTAMYYCAR.

The polypeptide is Ig heavy chain V region 5-84 (Mus musculus (Mouse)).